The sequence spans 331 residues: Glucokinase (331 aa).

An ATP-binding site is contributed by 13-18; it reads GDIGGT.

The protein belongs to the bacterial glucokinase family.

The protein resides in the cytoplasm. The enzyme catalyses D-glucose + ATP = D-glucose 6-phosphate + ADP + H(+). In Caulobacter vibrioides (strain ATCC 19089 / CIP 103742 / CB 15) (Caulobacter crescentus), this protein is Glucokinase.